A 623-amino-acid polypeptide reads, in one-letter code: UvrABC system protein C (623 aa).

Positions 21–100 (AEPGVYLMRD…IKTHQPPYNV (80 aa)) constitute a GIY-YIG domain. The UVR domain occupies 210–245 (DELIRELQEKMIQAAEQENYEAAARYRDQIRGLEQL).

This sequence belongs to the UvrC family. Interacts with UvrB in an incision complex.

The protein localises to the cytoplasm. The UvrABC repair system catalyzes the recognition and processing of DNA lesions. UvrC both incises the 5' and 3' sides of the lesion. The N-terminal half is responsible for the 3' incision and the C-terminal half is responsible for the 5' incision. The protein is UvrABC system protein C of Synechococcus sp. (strain JA-2-3B'a(2-13)) (Cyanobacteria bacterium Yellowstone B-Prime).